The chain runs to 186 residues: UPF0397 protein LCABL_04350 (186 aa).

The next 5 helical transmembrane spans lie at 12–32 (VVAIGIGTAILFILKRFAVIP), 45–65 (GFLGFIATLFGPIAGFFIGFL), 77–97 (TPWWTWVFTTGLVGMVIGLFW), 112–132 (IVSFNLLQIITNVVSWSLIAP), and 150–170 (GIVSAISNSIATGVIGTILLV).

The protein belongs to the UPF0397 family.

Its subcellular location is the cell membrane. This is UPF0397 protein LCABL_04350 from Lacticaseibacillus casei (strain BL23) (Lactobacillus casei).